The chain runs to 400 residues: Large envelope protein (400 aa).

Methionine 1 is modified (N-acetylmethionine). Glycine 2 carries N-myristoyl glycine; by host lipidation. Positions 2 to 119 (GAPLSTTRRG…PPLRDTHPQA (118 aa)) are pre-S1. The segment at 2–174 (GAPLSTTRRG…SSKTGGPAMN (173 aa)) is pre-S. The Virion surface; in external conformation portion of the chain corresponds to 2 to 181 (GAPLSTTRRG…AMNMENITSG (180 aa)). Topologically, residues 2-253 (GAPLSTTRRG…PGYRWMCLRR (252 aa)) are intravirion; in internal conformation. An N-linked (GlcNAc...) asparagine glycan is attached at proline 4. The disordered stretch occupies residues 84-110 (VLTTLPADPPPASTNRLSGRKPTQVSP). A compositionally biased stretch (polar residues) spans 96 to 109 (STNRLSGRKPTQVS). The tract at residues 120-174 (MQWNSTHFHQALLDPRVRALYFPAGGSSSGTQNPAPTIASLTSSISSKTGGPAMN) is pre-S2. Residues 182–202 (LLGPLRVLQAVCFLLTKILTI) traverse the membrane as a helical segment. The Intravirion; in external conformation segment spans residues 203–253 (PQSLDSWWTSLNFLGGLPRCPGQNSQSPTSNHLPTSCPPTCPGYRWMCLRR). A helical membrane pass occupies residues 254 to 274 (FIIFLFILLLCLIFLLVLLDY). The Virion surface portion of the chain corresponds to 275–348 (QGMLPVCPLL…WASARFSWLS (74 aa)). Asparagine 320 carries N-linked (GlcNAc...) asparagine; by host glycosylation. A helical membrane pass occupies residues 349–369 (LLVQFVQWCVGLSPTVWLLVI). Residues 370 to 375 (WMIWYW) lie on the Intravirion side of the membrane. The helical transmembrane segment at 376-398 (GPNLCSILSPFIPLLPIFCYLWV) threads the bilayer. Topologically, residues 399–400 (SI) are virion surface.

This sequence belongs to the orthohepadnavirus major surface antigen family. In its internal form (Li-HBsAg), interacts with the capsid protein and with the isoform S. Interacts with host chaperone CANX. In terms of assembly, associates with host chaperone CANX through its pre-S2 N glycan; this association may be essential for isoform M proper secretion. As to quaternary structure, interacts with isoform L. Interacts with the antigens of satellite virus HDV (HDVAgs); this interaction is required for encapsidation of HDV genomic RNA. Post-translationally, isoform M is N-terminally acetylated by host at a ratio of 90%, and N-glycosylated by host at the pre-S2 region. Myristoylated.

The protein resides in the virion membrane. Its function is as follows. The large envelope protein exists in two topological conformations, one which is termed 'external' or Le-HBsAg and the other 'internal' or Li-HBsAg. In its external conformation the protein attaches the virus to cell receptors and thereby initiating infection. This interaction determines the species specificity and liver tropism. This attachment induces virion internalization predominantly through caveolin-mediated endocytosis. The large envelope protein also assures fusion between virion membrane and endosomal membrane. In its internal conformation the protein plays a role in virion morphogenesis and mediates the contact with the nucleocapsid like a matrix protein. The middle envelope protein plays an important role in the budding of the virion. It is involved in the induction of budding in a nucleocapsid independent way. In this process the majority of envelope proteins bud to form subviral lipoprotein particles of 22 nm of diameter that do not contain a nucleocapsid. This is Large envelope protein from Homo sapiens (Human).